A 728-amino-acid chain; its full sequence is Phosphoribosylformylglycinamidine synthase subunit PurL (728 aa).

His42 is a catalytic residue. Residues Tyr45 and Lys84 each coordinate ATP. Residue Glu86 coordinates Mg(2+). Residues 87–90 and Arg109 each bind substrate; that span reads SHNH. His88 acts as the Proton acceptor in catalysis. Residue Asp110 participates in Mg(2+) binding. Gln237 contributes to the substrate binding site. Position 265 (Asp265) interacts with Mg(2+). A substrate-binding site is contributed by 309-311; the sequence is ESQ. Residues Asp491 and Gly528 each coordinate ATP. Asn529 is a Mg(2+) binding site. Ser531 contributes to the substrate binding site.

The protein belongs to the FGAMS family. Monomer. Part of the FGAM synthase complex composed of 1 PurL, 1 PurQ and 2 PurS subunits.

The protein localises to the cytoplasm. It carries out the reaction N(2)-formyl-N(1)-(5-phospho-beta-D-ribosyl)glycinamide + L-glutamine + ATP + H2O = 2-formamido-N(1)-(5-O-phospho-beta-D-ribosyl)acetamidine + L-glutamate + ADP + phosphate + H(+). Its pathway is purine metabolism; IMP biosynthesis via de novo pathway; 5-amino-1-(5-phospho-D-ribosyl)imidazole from N(2)-formyl-N(1)-(5-phospho-D-ribosyl)glycinamide: step 1/2. Part of the phosphoribosylformylglycinamidine synthase complex involved in the purines biosynthetic pathway. Catalyzes the ATP-dependent conversion of formylglycinamide ribonucleotide (FGAR) and glutamine to yield formylglycinamidine ribonucleotide (FGAM) and glutamate. The FGAM synthase complex is composed of three subunits. PurQ produces an ammonia molecule by converting glutamine to glutamate. PurL transfers the ammonia molecule to FGAR to form FGAM in an ATP-dependent manner. PurS interacts with PurQ and PurL and is thought to assist in the transfer of the ammonia molecule from PurQ to PurL. The polypeptide is Phosphoribosylformylglycinamidine synthase subunit PurL (Campylobacter jejuni subsp. jejuni serotype O:2 (strain ATCC 700819 / NCTC 11168)).